The chain runs to 112 residues: Mitochondrial import inner membrane translocase subunit TIM14-1 (112 aa).

An N-acetylalanine modification is found at alanine 2. A helical transmembrane segment spans residues 7–23 (AGVAVAATALAGRYGIQ). Residues 53–112 (EAALILGVRESVAAEKVKEAHRKVMVANHPDAGGSHFLASKINEAKDVMLGKTKNSGSAF) enclose the J domain.

The protein belongs to the TIM14 family. As to quaternary structure, probable component of the PAM complex at least composed of a mitochondrial HSP70 protein, TIMM44 and TIMM14. The complex interacts with the TIMM23 component of the TIM17:23 complex.

Its subcellular location is the mitochondrion. It is found in the mitochondrion inner membrane. Component of the PAM complex, a complex required for the translocation of transit peptide-containing proteins from the inner membrane into the mitochondrial matrix in an ATP-dependent manner. The polypeptide is Mitochondrial import inner membrane translocase subunit TIM14-1 (TIM14-1) (Arabidopsis thaliana (Mouse-ear cress)).